A 173-amino-acid polypeptide reads, in one-letter code: Shikimate kinase (173 aa).

ATP is bound at residue 14-19; it reads GAGKST. Position 18 (serine 18) interacts with Mg(2+). Positions 36, 60, and 82 each coordinate substrate. Position 120 (arginine 120) interacts with ATP. Arginine 140 provides a ligand contact to substrate. Residue glutamine 157 coordinates ATP.

The protein belongs to the shikimate kinase family. Monomer. Requires Mg(2+) as cofactor.

The protein resides in the cytoplasm. It carries out the reaction shikimate + ATP = 3-phosphoshikimate + ADP + H(+). The protein operates within metabolic intermediate biosynthesis; chorismate biosynthesis; chorismate from D-erythrose 4-phosphate and phosphoenolpyruvate: step 5/7. Catalyzes the specific phosphorylation of the 3-hydroxyl group of shikimic acid using ATP as a cosubstrate. The sequence is that of Shikimate kinase from Buchnera aphidicola subsp. Schizaphis graminum (strain Sg).